Reading from the N-terminus, the 531-residue chain is Tubulin-folding cofactor E (531 aa).

The CAP-Gly domain occupies 32-76 (GDVEGYSGTWIGVDWDQDGDGKHNGSVNGVFYFNGRSQSSASFVR). 9 LRR repeats span residues 84–109 (ITLL…MYVL), 159–183 (LPNL…ALCE), 185–213 (LPAL…NIRV), 233–256 (LPGI…SSSD), 260–284 (FNSL…KLSQ), 285–308 (LPCL…VNGT), 318–342 (FPSL…ALNG), 344–366 (PQLV…GVPR), and 474–497 (VGKL…LFLQ).

This sequence belongs to the TBCE family. In terms of assembly, supercomplex made of cofactors A to E. Cofactors A and D function by capturing and stabilizing tubulin in a quasi-native conformation. Cofactor E binds to the cofactor D-tubulin complex; interaction with cofactor C then causes the release of tubulin polypeptides that are committed to the native state.

It is found in the cytoplasm. In terms of biological role, essential tubulin-folding protein involved in the tubulin folding pathway. Not essential for cell viability. Probably involved in the binding of alpha-tubulin in the multimeric supercomplex. The protein is Tubulin-folding cofactor E (TFCE) of Arabidopsis thaliana (Mouse-ear cress).